We begin with the raw amino-acid sequence, 451 residues long: UDP-glycosyltransferase 13 (451 aa).

His15 (proton acceptor) is an active-site residue. Residue His15 participates in an anthocyanidin binding. The active-site Charge relay is the Asp93. Positions 326, 328, 343, 346, 347, 348, and 351 each coordinate UDP-alpha-D-glucose. Ala366 is a binding site for an anthocyanidin. Positions 367 and 368 each coordinate UDP-alpha-D-glucose.

Belongs to the UDP-glycosyltransferase family. As to expression, expressed in roots. Detected in stems and leaves.

The catalysed reaction is a 7-hydroxyisoflavone + UDP-alpha-D-glucose = a 7-hydroxyisoflavone 7-O-beta-D-glucoside + UDP + H(+). Isoflavone 7-O-glucosyltransferase converting daidzein to daidzin, genistein to genistin and formononetin to ononin. Shows some activity toward the flavanones liquiritigenin and naringenin, but not toward cyanidin, isoliquiritigenin, apigenin, luteolin, kaempferol, quercetin, daidzin and puerarin. The polypeptide is UDP-glycosyltransferase 13 (Pueraria montana var. lobata (Kudzu vine)).